The primary structure comprises 210 residues: Urease accessory protein UreE (210 aa).

The disordered stretch occupies residues proline 144–arginine 210. A compositionally biased stretch (basic and acidic residues) spans histidine 156–histidine 202.

The protein belongs to the UreE family.

It is found in the cytoplasm. Functionally, involved in urease metallocenter assembly. Binds nickel. Probably functions as a nickel donor during metallocenter assembly. This is Urease accessory protein UreE from Paracidovorax citrulli (strain AAC00-1) (Acidovorax citrulli).